Reading from the N-terminus, the 214-residue chain is tRNA (guanine-N(7)-)-methyltransferase (214 aa).

Residues glutamate 45, aspartate 70, asparagine 97, and asparagine 119 each contribute to the S-adenosyl-L-methionine site. Lysine 123 is a substrate binding site. The interval arginine 125–arginine 130 is interaction with RNA. Substrate is bound by residues aspartate 155 and threonine 193–glutamate 196.

It belongs to the class I-like SAM-binding methyltransferase superfamily. TrmB family.

The enzyme catalyses guanosine(46) in tRNA + S-adenosyl-L-methionine = N(7)-methylguanosine(46) in tRNA + S-adenosyl-L-homocysteine. Its pathway is tRNA modification; N(7)-methylguanine-tRNA biosynthesis. In terms of biological role, catalyzes the formation of N(7)-methylguanine at position 46 (m7G46) in tRNA. The sequence is that of tRNA (guanine-N(7)-)-methyltransferase from Clostridium novyi (strain NT).